The primary structure comprises 164 residues: Ribosome maturation factor RimM (164 aa).

A PRC barrel domain is found at 90 to 161 (KGSYFIADLI…TVTIKPLEIW (72 aa)).

This sequence belongs to the RimM family. As to quaternary structure, binds ribosomal protein uS19.

The protein resides in the cytoplasm. Its function is as follows. An accessory protein needed during the final step in the assembly of 30S ribosomal subunit, possibly for assembly of the head region. Essential for efficient processing of 16S rRNA. May be needed both before and after RbfA during the maturation of 16S rRNA. It has affinity for free ribosomal 30S subunits but not for 70S ribosomes. The sequence is that of Ribosome maturation factor RimM from Clostridium botulinum (strain Langeland / NCTC 10281 / Type F).